The primary structure comprises 117 residues: Hydrogenase maturation factor HypA (117 aa).

A Ni(2+)-binding site is contributed by histidine 2. Zn(2+)-binding residues include cysteine 73, cysteine 76, cysteine 90, and cysteine 93.

It belongs to the HypA/HybF family.

Functionally, involved in the maturation of [NiFe] hydrogenases. Required for nickel insertion into the metal center of the hydrogenase. In Pectobacterium atrosepticum (strain SCRI 1043 / ATCC BAA-672) (Erwinia carotovora subsp. atroseptica), this protein is Hydrogenase maturation factor HypA.